Reading from the N-terminus, the 366-residue chain is Histidinol-phosphate aminotransferase (366 aa).

Lys-228 is subject to N6-(pyridoxal phosphate)lysine.

This sequence belongs to the class-II pyridoxal-phosphate-dependent aminotransferase family. Histidinol-phosphate aminotransferase subfamily. Homodimer. Requires pyridoxal 5'-phosphate as cofactor.

The enzyme catalyses L-histidinol phosphate + 2-oxoglutarate = 3-(imidazol-4-yl)-2-oxopropyl phosphate + L-glutamate. The protein operates within amino-acid biosynthesis; L-histidine biosynthesis; L-histidine from 5-phospho-alpha-D-ribose 1-diphosphate: step 7/9. This is Histidinol-phosphate aminotransferase from Stutzerimonas stutzeri (Pseudomonas stutzeri).